The following is a 198-amino-acid chain: MQITADMVKKLREMTGAGVMECKTALTEADGDFEKAVEVLRKRGAAVAQKKAGRLTKEGIVTSYIHFNDKIGVLLELGCETDFVARMPEFKELAYNLAKHVAAMNPKYVTREDVPEEVLEKEKEIYRAQLENSNKPAAVVEKIVQGKLEKFYEEVCLYDQKYIFDDEKTVKEVVDELIGKIRENIRVTRFVRMRVGEE.

Residues 81–84 (TDFV) are involved in Mg(2+) ion dislocation from EF-Tu.

This sequence belongs to the EF-Ts family.

It localises to the cytoplasm. Functionally, associates with the EF-Tu.GDP complex and induces the exchange of GDP to GTP. It remains bound to the aminoacyl-tRNA.EF-Tu.GTP complex up to the GTP hydrolysis stage on the ribosome. The protein is Elongation factor Ts of Pseudothermotoga lettingae (strain ATCC BAA-301 / DSM 14385 / NBRC 107922 / TMO) (Thermotoga lettingae).